Consider the following 341-residue polypeptide: tRNA N6-adenosine threonylcarbamoyltransferase (341 aa).

His-111 and His-115 together coordinate Fe cation. Residues 134 to 138 (LVSGG), Asp-167, Gly-180, and Asn-276 each bind substrate. Asp-304 lines the Fe cation pocket.

It belongs to the KAE1 / TsaD family. Requires Fe(2+) as cofactor.

It localises to the cytoplasm. The catalysed reaction is L-threonylcarbamoyladenylate + adenosine(37) in tRNA = N(6)-L-threonylcarbamoyladenosine(37) in tRNA + AMP + H(+). Required for the formation of a threonylcarbamoyl group on adenosine at position 37 (t(6)A37) in tRNAs that read codons beginning with adenine. Is involved in the transfer of the threonylcarbamoyl moiety of threonylcarbamoyl-AMP (TC-AMP) to the N6 group of A37, together with TsaE and TsaB. TsaD likely plays a direct catalytic role in this reaction. In Alteromonas mediterranea (strain DSM 17117 / CIP 110805 / LMG 28347 / Deep ecotype), this protein is tRNA N6-adenosine threonylcarbamoyltransferase.